The sequence spans 222 residues: Iodotyrosine deiodinase (222 aa).

Residues Arg34 to Arg38 and Pro61 to Ser62 each bind FMN. 3-iodo-L-tyrosine is bound by residues Glu91, Tyr95, and Lys116. FMN is bound by residues Thr171–Thr173 and Arg212.

This sequence belongs to the nitroreductase family. In terms of assembly, homodimer. The cofactor is FMN.

It carries out the reaction 2 iodide + L-tyrosine + 2 NADP(+) = 3,5-diiodo-L-tyrosine + 2 NADPH + H(+). The catalysed reaction is iodide + L-tyrosine + NADP(+) = 3-iodo-L-tyrosine + NADPH. It catalyses the reaction 3-iodo-L-tyrosine + iodide + NADP(+) = 3,5-diiodo-L-tyrosine + NADPH + H(+). The enzyme catalyses L-tyrosine + chloride + NADP(+) = 3-chloro-L-tyrosine + NADPH. It carries out the reaction bromide + L-tyrosine + NADP(+) = 3-bromo-L-tyrosine + NADPH. Functionally, catalyzes the dehalogenation of halotyrosines such as 3-iodo-L-tyrosine and 3,5-diiodo-L-tyrosine. Likely to also catalyze the dehalogenation of other halotyrosines such as 3-bromo-L-tyrosine, 3-chloro-L-tyrosine and 3-iodo-L-tyrosine. Activity towards 3-iodo-L-tyrosine is much stronger than activity towards 3,5-diiodo-L-tyrosine and 2-iodophenol. The protein is Iodotyrosine deiodinase of Haliscomenobacter hydrossis (strain ATCC 27775 / DSM 1100 / LMG 10767 / O).